The following is a 225-amino-acid chain: Ribonuclease 3 (225 aa).

Residues 5–127 (IDKLERKLGY…IIGAIYLDSD (123 aa)) form the RNase III domain. E40 serves as a coordination point for Mg(2+). The active site involves D44. 2 residues coordinate Mg(2+): D113 and E116. The active site involves E116. One can recognise a DRBM domain in the interval 154 to 224 (DPKTRLQEFL…AETALEQLTN (71 aa)). The tract at residues 204 to 225 (GTSRRKAEQAAAETALEQLTNG) is disordered. The span at 212–225 (QAAAETALEQLTNG) shows a compositional bias: low complexity.

Belongs to the ribonuclease III family. Homodimer. Mg(2+) serves as cofactor.

The protein localises to the cytoplasm. The enzyme catalyses Endonucleolytic cleavage to 5'-phosphomonoester.. Functionally, digests double-stranded RNA. Involved in the processing of primary rRNA transcript to yield the immediate precursors to the large and small rRNAs (23S and 16S). Processes some mRNAs, and tRNAs when they are encoded in the rRNA operon. Processes pre-crRNA and tracrRNA of type II CRISPR loci if present in the organism. The chain is Ribonuclease 3 from Vibrio parahaemolyticus serotype O3:K6 (strain RIMD 2210633).